A 524-amino-acid polypeptide reads, in one-letter code: Cytochrome P450 monooxygenase patH (524 aa).

Residues 1–4 (MEPM) lie on the Cytoplasmic side of the membrane. The helical transmembrane segment at 5-23 (LLLILVAAVVLLFVRWAFV) threads the bilayer. The Lumenal portion of the chain corresponds to 24–524 (YGHRTSNMPK…KEVFSQFTEG (501 aa)). The N-linked (GlcNAc...) asparagine glycan is linked to asparagine 191. Cysteine 442 contacts heme. Asparagine 499 is a glycosylation site (N-linked (GlcNAc...) asparagine).

Belongs to the cytochrome P450 family. It depends on heme as a cofactor.

It is found in the endoplasmic reticulum membrane. It carries out the reaction 3-methylphenol + reduced [NADPH--hemoprotein reductase] + O2 = 3-hydroxybenzyl alcohol + oxidized [NADPH--hemoprotein reductase] + H2O + H(+). It functions in the pathway mycotoxin biosynthesis; patulin biosynthesis. In terms of biological role, cytochrome P450 monooxygenase; part of the gene cluster that mediates the biosynthesis of patulin, an acetate-derived tetraketide mycotoxin produced by several fungal species that shows antimicrobial properties against several bacteria. PatH catalyzes the conversion of m-cresol into m-hydroxybenzyl alcohol. The pathway begins with the synthesis of 6-methylsalicylic acid by the polyketide synthase (PKS) patK via condensation of acetate and malonate units. The 6-methylsalicylic acid decarboxylase patG then catalyzes the decarboxylation of 6-methylsalicylic acid to yield m-cresol (also known as 3-methylphenol). These first reactions occur in the cytosol. The intermediate m-cresol is then transported into the endoplasmic reticulum where the cytochrome P450 monooxygenase patH converts it to m-hydroxybenzyl alcohol, which is further converted to gentisyl alcohol by the cytochrome P450 monooxygenase patI. The oxidoreductases patJ and patO further convert gentisyl alcohol to isoepoxydon in the vacuole. PatN catalyzes then the transformation of isoepoxydon into phyllostine. The cluster protein patF is responsible for the conversion from phyllostine to neopatulin whereas the alcohol dehydrogenase patD converts neopatulin to E-ascladiol. The steps between isoepoxydon and E-ascladiol occur in the cytosol, and E-ascladiol is probably secreted to the extracellular space by one of the cluster-specific transporters patC or patM. Finally, the secreted patulin synthase patE catalyzes the conversion of E-ascladiol to patulin. The protein is Cytochrome P450 monooxygenase patH of Aspergillus clavatus (strain ATCC 1007 / CBS 513.65 / DSM 816 / NCTC 3887 / NRRL 1 / QM 1276 / 107).